The chain runs to 1205 residues: MAAMGHLGDPYALRSVADLPPPFRSVFGFRYFNSLQSECFPACFLSDVNMVISAPTGSGKTVLFELCILRLLSRFLSSEWRFNLIKGTLKTIYIAPMKALVQEKLRDWNMKLGSLGISCLEMTGDNEFYNTKSIHDADLILTTPEKFDSVSRHGIRDGGLGFFSDIALVLIDEVHLLNDPRGAALEAIVSRIKMLSRLGTMKIAPLANVRFIAVSATIPNIEDIAEWLAVPSEGIKRFGEEMRPVKLTTKVFGYAPARNDFLFERRLQSFIFDILMQHSRGKSALVFCSTRKGAQEAAQCLSQTASSLGYSNPFMKSMQQYEHLKEAALTCSDKQLQACLVHGVGYHNGGLCLKDRSVVEGLFLKGDIQILCTTNTLAHGINLPAHTVVIKSTQFFNKEKGLYVEYERSMVLQMCGRAGRPPFDDTGTIIIMTRRETVHLYENLLNGCEMVESQLLPCAVEHLNAEIVQLTVSDITLAIEWLKCSYLYIRIKKNPQHYGIKKEIPRELLEKQMKDICVEKIHELGEYGLIWTDEDGFLLKPLEPGRLMTKFYLKFDTMKLIVKASACCTLEDLLHIICHSAEITWIQLRRNEKKLLNEINADKEGRLWFHVVGANGKRKKRIQTREEKIFILANDCLTGDPLVHDLSLNQEMNSICSNGCRVAKCMREYFIYKKNYKSAISSMLLAKCLHQKLWESSPFLLKQLPGIGIVTAKALKTAGIDSFESLATADARKIESVTGRNYPFGDSIKSYLPSLGPKIDINIEDAGNRQGKSTIIVTLTRLSQAVGSSKQNYADMVVGSEEDNAILFHEKIKTQEFSSPYSVKLYVPCPPNARATLKVDVIFEEYVGLDIHKKHVVSREDFHVTKVFGIKKAEPLYNLPAESCLVSSKTTRTNQSKYHNGQNPLSKEVCVIEDDFRAKAPDKDDNDLEILGTREYNNLASLEAPSFTLLHEEDYEDVPDVLASEPVEAECKSATNNTIFDHIRKKSRDFPNLMLSKSMDSSYEPLILKKMKTSGDQFGLDQSSLHAYEVTPMVFDRTEARVSPNNTDERCRNILTRTAETRSFQFTGKMDSISQKSEILNRTQGKNSTQLAGKKAFEKSKTPDENSLHFVGKRDSSSEKSKALSKTPDENSLQFLGKMDSSSEKSKFCFSSPLADFQPMQCTKQVAASVQPLTIQDYCKDILASAKSSGTGASFLDVKSVFSFL.

Residues 41 to 236 (PACFLSDVNM…WLAVPSEGIK (196 aa)) enclose the Helicase ATP-binding domain. Position 54-61 (54-61 (APTGSGKT)) interacts with ATP. Positions 172–175 (DEVH) match the DEAH box motif. The Helicase C-terminal domain occupies 266–467 (RLQSFIFDIL…CAVEHLNAEI (202 aa)). An SEC63 domain is found at 541-852 (PLEPGRLMTK…FEEYVGLDIH (312 aa)). Positions 1075–1091 (QKSEILNRTQGKNSTQL) are enriched in polar residues. Residues 1075–1131 (QKSEILNRTQGKNSTQLAGKKAFEKSKTPDENSLHFVGKRDSSSEKSKALSKTPDEN) are disordered. Residues 1095-1122 (KAFEKSKTPDENSLHFVGKRDSSSEKSK) show a composition bias toward basic and acidic residues.

Belongs to the helicase family. SKI2 subfamily. In terms of tissue distribution, transcribed preferentially in early stages of meiocyte development and during meiosis in young flowers.

Its subcellular location is the nucleus. It is found in the chromosome. The enzyme catalyses Couples ATP hydrolysis with the unwinding of duplex DNA by translocating in the 3'-5' direction.. It carries out the reaction ATP + H2O = ADP + phosphate + H(+). Its function is as follows. DNA helicase required for crossover formation, complete synapsis of homologous chromosomes and bivalent formation during meiosis. Is specific to recombination events resulting in interference-sensitive crossovers (class I meiotic crossover). Works cooperatively with ZIP4 to promote crossovers. This is ATP-dependent DNA helicase MER3 homolog from Oryza sativa subsp. japonica (Rice).